The following is a 291-amino-acid chain: 4-diphosphocytidyl-2-C-methyl-D-erythritol kinase (291 aa).

Lys-10 is an active-site residue. An ATP-binding site is contributed by 94 to 104; the sequence is PVSAGLAGGSS. The active site involves Asp-136.

Belongs to the GHMP kinase family. IspE subfamily.

The catalysed reaction is 4-CDP-2-C-methyl-D-erythritol + ATP = 4-CDP-2-C-methyl-D-erythritol 2-phosphate + ADP + H(+). The protein operates within isoprenoid biosynthesis; isopentenyl diphosphate biosynthesis via DXP pathway; isopentenyl diphosphate from 1-deoxy-D-xylulose 5-phosphate: step 3/6. Functionally, catalyzes the phosphorylation of the position 2 hydroxy group of 4-diphosphocytidyl-2C-methyl-D-erythritol. In Listeria innocua serovar 6a (strain ATCC BAA-680 / CLIP 11262), this protein is 4-diphosphocytidyl-2-C-methyl-D-erythritol kinase.